A 564-amino-acid chain; its full sequence is Septation ring formation regulator EzrA (564 aa).

Over 1-4 the chain is Extracellular; the sequence is MVLF. The helical transmembrane segment at 5–23 threads the bilayer; it reads IILAILVVILIAIGVLFYM. Over 24–564 the chain is Cytoplasmic; it reads RSNKRNLIEK…KHIEEQVIKE (541 aa). 4 coiled-coil regions span residues 84–126, 165–223, 271–303, and 350–435; these read VEEK…HQVT, EAAE…LIRE, MISR…YEVK, and VRQF…RRLL.

Belongs to the EzrA family.

It localises to the cell membrane. In terms of biological role, negative regulator of FtsZ ring formation; modulates the frequency and position of FtsZ ring formation. Inhibits FtsZ ring formation at polar sites. Interacts either with FtsZ or with one of its binding partners to promote depolymerization. The chain is Septation ring formation regulator EzrA from Staphylococcus epidermidis (strain ATCC 35984 / DSM 28319 / BCRC 17069 / CCUG 31568 / BM 3577 / RP62A).